The sequence spans 3625 residues: MVNNMSLLFLWSLVIFLTFAESYGEAGGPELQRHKRNTELQQPRMAAERGNLVFFTGLAQNIEFRTGSQGKIKLNDEDVGECLRQIQKNKFDIMNLKRGIIGLPQNVSSQIHQLESKLVDLERRFQSLQLTVDGKVCSSNPCQNGATCLNLHDSFFCICPSQWKGPLCSDDVNECEIYSGTPLGCQNGATCINTPGSYSCLCSPETHGPQCASKYDDCEGGSEMRCVHGICEDLTRVQAGEPRFRCICHAGWTSPSNSTACTLDRDECSSWPAPCSALVPCFNTLGSFYCGACPTGWQGNGYICEDINECEINNGGCSVAPPVECVNTPGSYYCPSCPPGYQGDGRMCTLIDLCSVNNGGCHPHAACSLILGSLPLCTCLPGYTGNGYGLHGCVPLSNVCLTRPCLHGQCMETASGYVCNCDSGWAGMNCTENINECLSNPCLNGGTCVDGINAFSCECTRFWTGSLCHLPQQVCGGTMSDVSGSFSYMSPDVGYVHDVDCFWVLRTEEGKVLRITFTFFQLESVDNCPHEFLQIHDGDSPAAFPLGRFCGSSPPHELLSSDNALYFHFFSEHLRNERGFTIRWETRQPECGGVLTGTYGSLKSPGYPGKYPPGRDCVWKVIASPDLLITFTFGTLSLEHHDDCRKDYLEIRDGPLHQDPVLGKFCTSLSVPPLQTTGPFARIHFHSDNQINDQGFHITYLTTPSDLHCGGNFTDPEGLLSPDLSGPFTHSRQCIYVITQPLGEQIQVNFTHVELEGQSGCSQSYIEVRDDQTLLGKVCGNETPSHIKSITNSIWIRLKIDASVVRASFGAAYQVACGGELTGEGVIRSPFYPNVYPGERICRWTIHQPQSQVVLLNFTAFEMGSSAHCDTDYIEIGSSPVLGSPENKKYCGTDIPSFITSVYNSLHVVFVKSSSTENHGFMAKFSTEALACGEILTESSGIIQSPGHPNIYPHGVNCTWHILVQPGHLIHLEIRQFHLEFHYNCTRDYLEIYDTVSDTSLGRYCGKSIPPSLTSNTNSLKLIFVADADLAYEGFVINYEATDASAGNTTALLYRRIWIFTSPNFPSNYPNNMECIYRITVETSQQIALHFTDFSLEEPIGGACAADYVEITNGGYASSPPLGKYCGSNPPPRIISHSNKLWLKFKSDFFGSGPGFSAYWDGSLTGCGGNLTTPTGTFTSPNYPMPYYHSSECFWWLKSSHGSPFELEFNDFHLEYHPNCTLDYLDVYDGLSTSSHLLTRLCGNEKPPLIRSTGDSMSLKLRTDEGQQGGGFLVKYQQTCDNVVIVNRTYGILESIHYPKPYSVNQRCNWTIQATAGNTVNYTFLAFELESHANCSTDYLELYDGPQRMGRFCGAVIPPSGSTTGSRLQVLFHTDGVGQGERGFQMQWLVHGCGGELSGDTGTFSSPGYPVGYPANKECIWYIHSSPGSSIQLTIHDFDVEYHATCNFDVLEIYGGPDFHSPRIAQLCVQRSAENPMQVSSTGNELALRFKTDSSVNGRGFNVSWRAVPGGCGGIFQAPSGEIHSPNYPSPYRSNTECTWLIQVEKNHRVLLNFTDFDLEPQDSCIMAFDGLSSATARLVGVCGRQQLSNPIISTGSSLFVRFQSGPSRQSRGFRAQFRQACGGHILTDSFDTISSPRFPASYPNNQNCSWIIQAQPPFNHITLSFSHFGLESSSTCTRDFVEILDGSHSDAPLRGRYCGSSMPHPITSFGNALMLRFVSDSSVNFDGFHATYVASTSACGGIFHMAEGIFNSPGYPEVYPSNVECVWNIASSPGNQLQLSFITFQLEDSRDCSRDFVEIREGNATGRLVGRYCGNVLPLNYSSIIGHDLWIKFVSDGSGSGVGFQAAFNNIFGNDHIVGTHGKVASPLWPRNYPHNSNYQWIVNVNESQVIHGRILEMDVEGTFNCYYDKLRIYDGADIHSRLIGTYCGAQTESFSSTGSSLTFQFSSDSSISGRGFLLEWFAMDASDGPLPTIATGACGGFLRTGDAPVFLYSPGWPGSYSNGADCMWLIQAPDSTVELNILSLDIESHRTCDYDKLVIRDGDNNMAQELAVLCGREIPGPIRSTGEYMTIRFTSDFSVTRAGFNASFHKSCGGYLHADRGIITSPGYPEAYTSNLNCSWHVQVQQGLSIAVHFEQPFQVSNRDAFCNQGDYLVLKNGPDIYSPPLGPHGGNGRFCGSRPSSTLFTSDNELFVQFISDNSNEGQGFKITYEAKSLACGGNIYIHDADSSGYVASPNHPDNYPQHADCIWVIAAPSGRPIRLEFEDQFSIEITPNCTSSYLELRDGADSNAPVLAKFCGTSLPPSQLSSGEVMYLRFRSDNSPTHAGFKAKYSIAQCGGTVTGQSGVIESSGYPALPYANNLFCEWRLQGLSGHYLTIHFEDFNLQNSSGCERDFVEIWENHTSGNLLGRYCGNTVPDSIDTSGNVALVRFVTDGFLTASGFRLRFDSSMEGCGGDLQGPTGTFTAPNYLNPNPHGWMCEWRITVQEGRRVTLTLNDLRLEAHPFCNSEHVAVFNGIRSNSPQLEKRCSSVNGSNEIRSSGNTMKVVYFTDGSRPYGGFTASYTSSEDAVCGGSLTNSPEGNFTSPGYDGTRNYSRNLNCEWTLSNSNQGNSSIYIDFEDFYLESHQDCQFDVLEFRVDNADGLLIWRLCGSSKPTMPLVIPYPQVWIHFVTNERVEHIGFRARYSFTDCGGIQIGDHGVISSPNYPASYDSLTHCSWLLEAPQGHTITLTFSDFDIEAHASCAWDSVTVRNGGSPGSPIIGHYCGSSNPRTIQSGSNQLVVIFNTDSSVQNGGFYATWNTETSGCGGILHSDTGTIRSPHWPQNFPENSRCSWTVITHPSKHLEISFDNNFLIPSGDSQCLNSFVKVWAGTQEADKDLLATSCGNVSPGRIITPRNAFTAVFQSQETPAQGFSASFLSRCGRNFTNPSGYIVSPNYPKQYDNNMNCTYIIEASPLSVILLKVVSFHLEARSTVSGSCDSDGVHIIRGHSLSSTPLVTLCGDEALSPVTISGPVLLNFYSNAHTTDFGFKFSYRITPCGGTFNLSFGIIKSPSYSYSNYPNDMHCLYTVTVRDDRVIQLKFNDFDLVPSTFCSQDYLEIYDGSNISDPLLGKFCGSTLPPNVKSSNNTMFLVFKTDSVHTARGWKISFRETLGPQQGCGGYLTGSTHTFGSPDSDSNGRYDKNLNCIWFITAPVNKLIKLTFSTFALEAATSLQRCIYDYVKLYDGDSENANLAGTFCGSTVPAPFISSGNFLTVQFVSDSSLEREGFNATYTLLDMPCGGTYNATWTSQSIWSPSSSDPDVPLTTCTWVIEAPLHQQVEITVWTFQLHSQDCDQNYLEFRDPPERNGNPGIRFCGRNASAVPTFYSSLSTAIIIFKSEVFNTDSRVGFTYRIAGCSREYQKAFGRLRSPGWPAGYASDADCAVVLRAPQNHTISLFFHAFGLEDSGGCTRDFLEVRNGSESTSPLLGKYCGTLLPNPIFSQSRDLYLRFKSDSATSGRGYEIIWTSSPSGCGGTLYGDSGLVTSPGYPGTYPNHTHCEWVIIAPGGRPVTVSFSFISIDDPGECVQNYLMLYDGPDANSPSSGPYCGADTDVAPFAASSHRVFIRFHAEAAARPSALRLTWAS.

The N-terminal stretch at 1–20 (MVNNMSLLFLWSLVIFLTFA) is a signal peptide. Residues 21 to 36 (ESYGEAGGPELQRHKR) constitute a propeptide, removed in mature form. An interaction with AMN region spans residues 43 to 50 (PRMAAERG). An N-linked (GlcNAc...) asparagine glycan is attached at Asn-106. Residues 133–169 (DGKVCSSNPCQNGATCLNLHDSFFCICPSQWKGPLCS) enclose the EGF-like 1 domain. Cystine bridges form between Cys-137–Cys-148, Cys-142–Cys-157, Cys-159–Cys-168, Cys-175–Cys-191, Cys-185–Cys-200, and Cys-202–Cys-211. Residues 171–212 (DVNECEIYSGTPLGCQNGATCINTPGSYSCLCSPETHGPQCA) form the EGF-like 2; calcium-binding domain. Asn-257 carries an N-linked (GlcNAc...) asparagine glycan. Residues 264-305 (DRDECSSWPAPCSALVPCFNTLGSFYCGACPTGWQGNGYICE) enclose the EGF-like 3; calcium-binding domain. 20 cysteine pairs are disulfide-bonded: Cys-268–Cys-281, Cys-275–Cys-290, Cys-293–Cys-304, Cys-310–Cys-325, Cys-317–Cys-334, Cys-337–Cys-348, Cys-354–Cys-367, Cys-361–Cys-377, Cys-379–Cys-393, Cys-400–Cys-410, Cys-405–Cys-419, Cys-421–Cys-430, Cys-437–Cys-448, Cys-442–Cys-457, Cys-459–Cys-468, Cys-475–Cys-501, Cys-528–Cys-550, Cys-591–Cys-617, Cys-644–Cys-666, and Cys-709–Cys-734. The 44-residue stretch at 306-349 (DINECEINNGGCSVAPPVECVNTPGSYYCPSCPPGYQGDGRMCT) folds into the EGF-like 4; calcium-binding domain. EGF-like domains are found at residues 350–394 (LIDL…HGCV) and 396–431 (LSNVCLTRPCLHGQCMETASGYVCNCDSGWAGMNCT). Asn-429 carries an N-linked (GlcNAc...) asparagine glycan. The 37-residue stretch at 433–469 (NINECLSNPCLNGGTCVDGINAFSCECTRFWTGSLCH) folds into the EGF-like 7; calcium-binding domain. 27 CUB domains span residues 475–587 (CGGT…WETR), 591–703 (CGGV…YLTT), 709–816 (CGGN…YQVA), 817–928 (CGGE…FSTE), 932–1042 (CGEI…YEAT), 1045–1163 (SAGN…WDGS), 1167–1279 (CGGN…YQQT), 1280–1391 (CDNV…WLVH), 1393–1508 (CGGE…WRAV), 1512–1621 (CGGI…FRQA), 1622–1736 (CGGH…YVAS), 1740–1852 (CGGI…FNNI), 1854–1965 (GNDH…WFAM), 1980–2093 (CGGF…FHKS), 2094–2215 (CGGY…YEAK), 2219–2336 (CGGN…YSIA), 2338–2450 (CGGT…FDSS), 2454–2567 (CGGD…YTSS), 2572–2689 (CGGS…YSFT), 2691–2803 (CGGI…WNTE), 2807–2921 (CGGI…FLSR), 2922–3037 (CGRN…YRIT), 3039–3152 (CGGT…FRET), 3159–3276 (CGGY…YTLL), 3280–3397 (CGGT…IAGC), 3397–3509 (CSRE…WTSS), and 3513–3625 (CGGT…TWAS). Asn-712 and Asn-749 each carry an N-linked (GlcNAc...) asparagine glycan. Cys-761 and Cys-779 are joined by a disulfide. The N-linked (GlcNAc...) asparagine glycan is linked to Asn-781. Cys-817 and Cys-842 are disulfide-bonded. Asn-857 carries an N-linked (GlcNAc...) asparagine glycan. Disulfide bonds link Cys-869-Cys-891 and Cys-932-Cys-958. A glycan (N-linked (GlcNAc...) asparagine) is linked at Asn-957. Ca(2+) is bound at residue Glu-980. Asn-984 carries N-linked (GlcNAc...) asparagine glycosylation. A disulfide bridge connects residues Cys-985 and Cys-1005. Positions 988, 1027, 1029, and 1030 each coordinate Ca(2+). N-linked (GlcNAc...) asparagine glycosylation occurs at Asn-1048. Residues Glu-1097, Asp-1107, and Asp-1148 each coordinate Ca(2+). Cysteines 1104 and 1126 form a disulfide. Cys-1167 and Cys-1193 are joined by a disulfide. N-linked (GlcNAc...) asparagine glycosylation is present at Asn-1170. Residue Glu-1215 participates in Ca(2+) binding. N-linked (GlcNAc...) asparagine glycosylation occurs at Asn-1219. Cys-1220 and Cys-1242 are disulfide-bonded. Asp-1223, Asp-1264, Gly-1266, and Gln-1267 together coordinate Ca(2+). Cys-1280 and Cys-1308 are oxidised to a cystine. Asn-1287, Asn-1309, and Asn-1321 each carry an N-linked (GlcNAc...) asparagine glycan. A Ca(2+)-binding site is contributed by Glu-1330. N-linked (GlcNAc...) asparagine glycosylation is present at Asn-1334. Cysteines 1335 and 1353 form a disulfide. Residues Asp-1338, Asp-1375, and Val-1377 each coordinate Ca(2+). Disulfide bonds link Cys-1393/Cys-1419 and Cys-1446/Cys-1468. Asn-1502 carries an N-linked (GlcNAc...) asparagine glycan. A disulfide bridge links Cys-1512 with Cys-1538. Asn-1553 is a glycosylation site (N-linked (GlcNAc...) asparagine). 5 disulfides stabilise this stretch: Cys-1565/Cys-1583, Cys-1622/Cys-1649, Cys-1677/Cys-1699, Cys-1740/Cys-1766, and Cys-1793/Cys-1814. N-linked (GlcNAc...) asparagine glycosylation is present at Asn-1648. 3 N-linked (GlcNAc...) asparagine glycosylation sites follow: Asn-1804, Asn-1821, and Asn-1887. Intrachain disulfides connect Cys-1907–Cys-1929, Cys-1980–Cys-2008, and Cys-2034–Cys-2056. Residues Asn-2087 and Asn-2119 are each glycosylated (N-linked (GlcNAc...) asparagine). Cystine bridges form between Cys-2094/Cys-2120 and Cys-2219/Cys-2249. Asn-2276 carries an N-linked (GlcNAc...) asparagine glycan. 2 cysteine pairs are disulfide-bonded: Cys-2277/Cys-2299 and Cys-2338/Cys-2365. Residues Asn-2388 and Asn-2402 are each glycosylated (N-linked (GlcNAc...) asparagine). Intrachain disulfides connect Cys-2392–Cys-2413, Cys-2454–Cys-2480, and Cys-2507–Cys-2529. Asn-2533, Asn-2583, Asn-2594, and Asn-2612 each carry an N-linked (GlcNAc...) asparagine glycan. An intrachain disulfide couples Cys-2572 to Cys-2601. 5 disulfide bridges follow: Cys-2630–Cys-2651, Cys-2691–Cys-2717, Cys-2744–Cys-2766, Cys-2807–Cys-2833, and Cys-2862–Cys-2885. Residues Asn-2887, Asn-2925, Asn-2928, and Asn-2947 are each glycosylated (N-linked (GlcNAc...) asparagine). 2 cysteine pairs are disulfide-bonded: Cys-2922/Cys-2948 and Cys-2979/Cys-3001. Residue Thr-3010 is modified to Phosphothreonine. Disulfide bonds link Cys-3039-Cys-3066 and Cys-3093-Cys-3115. N-linked (GlcNAc...) asparagine glycosylation is found at Asn-3044, Asn-3105, and Asn-3127. Disulfide bonds link Cys-3159–Cys-3187 and Cys-3217–Cys-3239. N-linked (GlcNAc...) asparagine glycosylation is found at Asn-3270 and Asn-3285. 2 cysteine pairs are disulfide-bonded: Cys-3280-Cys-3308 and Cys-3334-Cys-3356. N-linked (GlcNAc...) asparagine glycosylation is present at Asn-3359. A disulfide bridge connects residues Cys-3397 and Cys-3423. N-linked (GlcNAc...) asparagine glycans are attached at residues Asn-3432, Asn-3459, and Asn-3535. Intrachain disulfides connect Cys-3450-Cys-3472, Cys-3513-Cys-3539, and Cys-3566-Cys-3588.

As to quaternary structure, interacts with AMN. Component of the cubam complex composed of one CUBN trimer and one AMN chain. The cubam complex can dimerize. Interacts with LRP2 in a dual-receptor complex in a calcium-dependent manner. Found in a complex with PID1/PCLI1, LRP1 and CUBNI. Interacts with LRP1 and PID1/PCLI1. The precursor is cleaved by a trans-Golgi proteinase furin, removing a propeptide. In terms of processing, N-glycosylated. As to expression, detected in kidney cortex (at protein level).

It is found in the apical cell membrane. Its subcellular location is the cell membrane. The protein resides in the membrane. It localises to the coated pit. The protein localises to the endosome. It is found in the lysosome membrane. Functionally, endocytic receptor which plays a role in lipoprotein, vitamin and iron metabolism by facilitating their uptake. Acts together with LRP2 to mediate endocytosis of high-density lipoproteins, GC, hemoglobin, ALB, TF and SCGB1A1. Acts together with AMN to mediate endocytosis of the CBLIF-cobalamin complex. Binds to ALB, MB, Kappa and lambda-light chains, TF, hemoglobin, GC, SCGB1A1, APOA1, high density lipoprotein, and the CBLIF-cobalamin complex. Ligand binding requires calcium. Serves as important transporter in several absorptive epithelia, including intestine, renal proximal tubules and embryonic yolk sac. May play an important role in the development of the peri-implantation embryo through internalization of APOA1 and cholesterol. Binds to LGALS3 at the maternal-fetal interface. In Sus scrofa (Pig), this protein is Cubilin (CUBN).